Here is a 306-residue protein sequence, read N- to C-terminus: Ornithine carbamoyltransferase (306 aa).

Carbamoyl phosphate-binding positions include 54 to 57 (STRT), Gln-81, Arg-105, and 132 to 135 (HPLQ). Residues Asn-162, Asp-226, and 230–231 (SM) each bind L-ornithine. Carbamoyl phosphate is bound by residues 266 to 267 (CL) and Arg-294.

It belongs to the aspartate/ornithine carbamoyltransferase superfamily. OTCase family.

It is found in the cytoplasm. The enzyme catalyses carbamoyl phosphate + L-ornithine = L-citrulline + phosphate + H(+). The protein operates within amino-acid biosynthesis; L-arginine biosynthesis; L-arginine from L-ornithine and carbamoyl phosphate: step 1/3. In terms of biological role, reversibly catalyzes the transfer of the carbamoyl group from carbamoyl phosphate (CP) to the N(epsilon) atom of ornithine (ORN) to produce L-citrulline. The sequence is that of Ornithine carbamoyltransferase from Sulfolobus acidocaldarius (strain ATCC 33909 / DSM 639 / JCM 8929 / NBRC 15157 / NCIMB 11770).